Consider the following 424-residue polypeptide: CinA-like protein (424 aa).

It belongs to the CinA family.

The protein is CinA-like protein of Shewanella amazonensis (strain ATCC BAA-1098 / SB2B).